The primary structure comprises 501 residues: Calcium-dependent protein kinase 4 (501 aa).

The region spanning 25 to 283 is the Protein kinase domain; sequence YLLGKKLGQG…AHEALCHPWI (259 aa). ATP-binding positions include 31–39 and Lys-54; that span reads LGQGQFGTT. The active-site Proton acceptor is the Asp-149. Phosphoserine is present on Ser-189. Residues 289–319 form an autoinhibitory domain region; it reads APDKPLDPAVLSRLKQFSQMNKIKKMALRVI. EF-hand domains follow at residues 326 to 361, 362 to 397, 398 to 433, and 437 to 467; these read EEIGGLKELFKMIDTDNSGTITFEELKAGLKRVGSE, LMESEIKSLMDAADIDNSGTIDYGEFLAATLHINKM, EREENLVVAFSYFDKDGSGYITIDELQQACTEFGLC, and LDDMIKEIDLDNDGKIDFSEFTAMMKKGDGV. Residues Asp-339, Asp-341, Ser-343, Thr-345, Glu-350, Asp-375, Asp-377, Ser-379, Thr-381, Glu-386, Asp-411, Asp-413, Ser-415, Tyr-417, Glu-422, Asp-445, Asp-447, Asp-449, Lys-451, and Glu-456 each coordinate Ca(2+).

It belongs to the protein kinase superfamily. Ser/Thr protein kinase family. CDPK subfamily. As to quaternary structure, interacts with Di19.

The protein localises to the cytoplasm. The protein resides in the nucleus. It catalyses the reaction L-seryl-[protein] + ATP = O-phospho-L-seryl-[protein] + ADP + H(+). The catalysed reaction is L-threonyl-[protein] + ATP = O-phospho-L-threonyl-[protein] + ADP + H(+). Its activity is regulated as follows. Activated by calcium. Autophosphorylation may play an important role in the regulation of the kinase activity. Functionally, may play a role in signal transduction pathways that involve calcium as a second messenger. Functions as a regulator of the calcium-mediated abscisic acid (ABA) signaling pathway. Phosphorylates ABA-responsive transcription factors ABF1 and ABF4 in vitro. Phosphorylates the nuclear zinc finger Di19 in vitro. This chain is Calcium-dependent protein kinase 4 (CPK4), found in Arabidopsis thaliana (Mouse-ear cress).